The primary structure comprises 56 residues: Small ribosomal subunit protein uS14 (56 aa).

Residues cysteine 21, cysteine 24, cysteine 39, and cysteine 42 each coordinate Zn(2+).

The protein belongs to the universal ribosomal protein uS14 family. Zinc-binding uS14 subfamily. As to quaternary structure, part of the 30S ribosomal subunit. It depends on Zn(2+) as a cofactor.

Binds 16S rRNA, required for the assembly of 30S particles. The chain is Small ribosomal subunit protein uS14 from Methanospirillum hungatei JF-1 (strain ATCC 27890 / DSM 864 / NBRC 100397 / JF-1).